Here is a 232-residue protein sequence, read N- to C-terminus: Ubiquinone biosynthesis O-methyltransferase (232 aa).

S-adenosyl-L-methionine-binding residues include Arg-36, Gly-55, Asp-76, and Met-120.

The protein belongs to the methyltransferase superfamily. UbiG/COQ3 family.

It carries out the reaction a 3-demethylubiquinol + S-adenosyl-L-methionine = a ubiquinol + S-adenosyl-L-homocysteine + H(+). The catalysed reaction is a 3-(all-trans-polyprenyl)benzene-1,2-diol + S-adenosyl-L-methionine = a 2-methoxy-6-(all-trans-polyprenyl)phenol + S-adenosyl-L-homocysteine + H(+). The protein operates within cofactor biosynthesis; ubiquinone biosynthesis. In terms of biological role, O-methyltransferase that catalyzes the 2 O-methylation steps in the ubiquinone biosynthetic pathway. This chain is Ubiquinone biosynthesis O-methyltransferase, found in Thiobacillus denitrificans (strain ATCC 25259 / T1).